Here is a 346-residue protein sequence, read N- to C-terminus: Biotin synthase (346 aa).

Residues 41 to 265 enclose the Radical SAM core domain; it reads NEVQISTLLS…MMPHSYVRLS (225 aa). [4Fe-4S] cluster-binding residues include Cys-56, Cys-60, and Cys-63. The [2Fe-2S] cluster site is built by Cys-100, Cys-131, Cys-191, and Arg-263.

It belongs to the radical SAM superfamily. Biotin synthase family. As to quaternary structure, homodimer. [4Fe-4S] cluster is required as a cofactor. It depends on [2Fe-2S] cluster as a cofactor.

The enzyme catalyses (4R,5S)-dethiobiotin + (sulfur carrier)-SH + 2 reduced [2Fe-2S]-[ferredoxin] + 2 S-adenosyl-L-methionine = (sulfur carrier)-H + biotin + 2 5'-deoxyadenosine + 2 L-methionine + 2 oxidized [2Fe-2S]-[ferredoxin]. The protein operates within cofactor biosynthesis; biotin biosynthesis; biotin from 7,8-diaminononanoate: step 2/2. Its function is as follows. Catalyzes the conversion of dethiobiotin (DTB) to biotin by the insertion of a sulfur atom into dethiobiotin via a radical-based mechanism. This chain is Biotin synthase, found in Pseudoalteromonas translucida (strain TAC 125).